The primary structure comprises 502 residues: ATP synthase subunit alpha, chloroplastic (502 aa).

170 to 177 (GDRQTGKT) contacts ATP.

Belongs to the ATPase alpha/beta chains family. F-type ATPases have 2 components, CF(1) - the catalytic core - and CF(0) - the membrane proton channel. CF(1) has five subunits: alpha(3), beta(3), gamma(1), delta(1), epsilon(1). CF(0) has four main subunits: a, b, b' and c.

The protein localises to the plastid. It localises to the chloroplast thylakoid membrane. It catalyses the reaction ATP + H2O + 4 H(+)(in) = ADP + phosphate + 5 H(+)(out). Produces ATP from ADP in the presence of a proton gradient across the membrane. The alpha chain is a regulatory subunit. The protein is ATP synthase subunit alpha, chloroplastic of Tupiella akineta (Green alga).